We begin with the raw amino-acid sequence, 82 residues long: Omega-conotoxin PnVIB (82 aa).

The first 22 residues, 1-22 (MKLTCMMIVAVLFLTAWTVVTA), serve as a signal peptide directing secretion. Residues 23 to 52 (EPHSSNVLENLYLKAHHEMENPEASKLNTR) constitute a propeptide that is removed on maturation. 3 disulfide bridges follow: Cys56/Cys73, Cys63/Cys77, and Cys72/Cys81.

As to expression, expressed by the venom duct.

The protein localises to the secreted. Omega-conotoxins act at presynaptic membranes, they bind and block voltage-gated calcium channels (Cav). Acts on high voltage-activated (HVA) calcium currents in molluscan neurons. The sequence is that of Omega-conotoxin PnVIB from Conus pennaceus (Feathered cone).